A 274-amino-acid chain; its full sequence is Rhamnulose-1-phosphate aldolase (274 aa).

The active site involves Glu117. Positions 141, 143, and 212 each coordinate Zn(2+).

Belongs to the aldolase class II family. RhaD subfamily. In terms of assembly, homotetramer. Requires Zn(2+) as cofactor.

It is found in the cytoplasm. It catalyses the reaction L-rhamnulose 1-phosphate = (S)-lactaldehyde + dihydroxyacetone phosphate. The protein operates within carbohydrate degradation; L-rhamnose degradation; glycerone phosphate from L-rhamnose: step 3/3. Catalyzes the reversible cleavage of L-rhamnulose-1-phosphate to dihydroxyacetone phosphate (DHAP) and L-lactaldehyde. In Escherichia coli O6:H1 (strain CFT073 / ATCC 700928 / UPEC), this protein is Rhamnulose-1-phosphate aldolase.